The following is a 160-amino-acid chain: Probable small nuclear ribonucleoprotein-associated protein B (160 aa).

Positions 4 to 86 (SKNNKMMAHL…IVSMTVDGPP (83 aa)) constitute a Sm domain. Residues 80 to 160 (MTVDGPPPRD…YGGPPGGRPF (81 aa)) form a disordered region. Gly residues-rich tracts occupy residues 99-113 (GGAGGVGQAKPGGRG), 128-143 (APGGLSGAMRGHGGPG), and 150-160 (GYGGPPGGRPF).

Belongs to the snRNP SmB/SmN family.

It is found in the nucleus. It localises to the cytoplasm. Its subcellular location is the cytosol. Its function is as follows. Plays a role in pre-mRNA splicing as a core component of the spliceosomal U1, U2, U4 and U5 small nuclear ribonucleoproteins (snRNPs), the building blocks of the spliceosome. This chain is Probable small nuclear ribonucleoprotein-associated protein B (snr-2), found in Caenorhabditis elegans.